A 187-amino-acid polypeptide reads, in one-letter code: Dihydrofolate reductase type A10 (187 aa).

One can recognise a DHFR domain in the interval 2–174 (NISLIFANEL…YSLSIDKFVR (173 aa)).

Belongs to the dihydrofolate reductase family. Homodimer.

It catalyses the reaction (6S)-5,6,7,8-tetrahydrofolate + NADP(+) = 7,8-dihydrofolate + NADPH + H(+). Its pathway is cofactor biosynthesis; tetrahydrofolate biosynthesis; 5,6,7,8-tetrahydrofolate from 7,8-dihydrofolate: step 1/1. In terms of biological role, key enzyme in folate metabolism. Catalyzes an essential reaction for de novo glycine and purine synthesis, and for DNA precursor synthesis. The chain is Dihydrofolate reductase type A10 (dfrA10) from Escherichia coli.